A 224-amino-acid chain; its full sequence is Pyridoxine/pyridoxamine 5'-phosphate oxidase (224 aa).

Residues Arg-19 to Tyr-22 and Lys-81 each bind substrate. FMN is bound by residues Arg-76 to Lys-81, Phe-91 to Thr-92, Lys-98, and Gln-120. Substrate contacts are provided by Tyr-138 and Arg-142. Residues Gln-155–Ser-156 and Trp-201 each bind FMN. Position 207–209 (Arg-207–His-209) interacts with substrate. An FMN-binding site is contributed by Arg-211.

It belongs to the pyridoxamine 5'-phosphate oxidase family. In terms of assembly, homodimer. The cofactor is FMN.

The catalysed reaction is pyridoxamine 5'-phosphate + O2 + H2O = pyridoxal 5'-phosphate + H2O2 + NH4(+). It carries out the reaction pyridoxine 5'-phosphate + O2 = pyridoxal 5'-phosphate + H2O2. It participates in cofactor metabolism; pyridoxal 5'-phosphate salvage; pyridoxal 5'-phosphate from pyridoxamine 5'-phosphate: step 1/1. The protein operates within cofactor metabolism; pyridoxal 5'-phosphate salvage; pyridoxal 5'-phosphate from pyridoxine 5'-phosphate: step 1/1. Functionally, catalyzes the oxidation of either pyridoxine 5'-phosphate (PNP) or pyridoxamine 5'-phosphate (PMP) into pyridoxal 5'-phosphate (PLP). The polypeptide is Pyridoxine/pyridoxamine 5'-phosphate oxidase (Mycobacterium bovis (strain ATCC BAA-935 / AF2122/97)).